Reading from the N-terminus, the 363-residue chain is Phosphate acyltransferase (363 aa).

The disordered stretch occupies residues 326–363 (ADSHPSKVNAGENAPPLASASNPSPEALPVGSLDRVEG). A compositionally biased stretch (low complexity) spans 337-354 (ENAPPLASASNPSPEALP).

Belongs to the PlsX family. In terms of assembly, homodimer. Probably interacts with PlsY.

It localises to the cytoplasm. It catalyses the reaction a fatty acyl-[ACP] + phosphate = an acyl phosphate + holo-[ACP]. The protein operates within lipid metabolism; phospholipid metabolism. Its function is as follows. Catalyzes the reversible formation of acyl-phosphate (acyl-PO(4)) from acyl-[acyl-carrier-protein] (acyl-ACP). This enzyme utilizes acyl-ACP as fatty acyl donor, but not acyl-CoA. The protein is Phosphate acyltransferase of Synechococcus sp. (strain JA-3-3Ab) (Cyanobacteria bacterium Yellowstone A-Prime).